The primary structure comprises 162 residues: UPF0114 protein Shewmr4_0646 (162 aa).

4 helical membrane-spanning segments follow: residues 15-35 (IMAPIYLGLSLVLLGLGIKFF), 53-73 (LVLVTLSLIDITLVGGLIVMV), 108-128 (KVAASIVAISSIHLLKIFMDV), and 136-156 (IMWYLLIHITFVVSAFAMGYL).

This sequence belongs to the UPF0114 family.

It is found in the cell membrane. This Shewanella sp. (strain MR-4) protein is UPF0114 protein Shewmr4_0646.